The chain runs to 372 residues: DNA replication and repair protein RecF (372 aa).

30 to 37 (GENGQGKT) is a binding site for ATP.

This sequence belongs to the RecF family.

The protein resides in the cytoplasm. Its function is as follows. The RecF protein is involved in DNA metabolism; it is required for DNA replication and normal SOS inducibility. RecF binds preferentially to single-stranded, linear DNA. It also seems to bind ATP. The sequence is that of DNA replication and repair protein RecF from Anaeromyxobacter sp. (strain K).